Reading from the N-terminus, the 151-residue chain is Phosphopantetheine adenylyltransferase (151 aa).

Position 9 (S9) interacts with substrate. ATP is bound by residues 9–10 (SF) and H17. 3 residues coordinate substrate: K41, T73, and R87. Residues 88–90 (GLR), E98, and 122–128 (KAHISST) contribute to the ATP site.

Belongs to the bacterial CoaD family. As to quaternary structure, homohexamer. Mg(2+) is required as a cofactor.

Its subcellular location is the cytoplasm. The enzyme catalyses (R)-4'-phosphopantetheine + ATP + H(+) = 3'-dephospho-CoA + diphosphate. It participates in cofactor biosynthesis; coenzyme A biosynthesis; CoA from (R)-pantothenate: step 4/5. In terms of biological role, reversibly transfers an adenylyl group from ATP to 4'-phosphopantetheine, yielding dephospho-CoA (dPCoA) and pyrophosphate. The protein is Phosphopantetheine adenylyltransferase of Christiangramia forsetii (strain DSM 17595 / CGMCC 1.15422 / KT0803) (Gramella forsetii).